A 392-amino-acid chain; its full sequence is Imidazolonepropionase (392 aa).

2 residues coordinate Fe(3+): histidine 69 and histidine 71. 2 residues coordinate Zn(2+): histidine 69 and histidine 71. 4-imidazolone-5-propanoate-binding residues include arginine 78, tyrosine 136, and histidine 163. Tyrosine 136 is a binding site for N-formimidoyl-L-glutamate. Histidine 226 lines the Fe(3+) pocket. Histidine 226 contributes to the Zn(2+) binding site. Glutamine 229 contributes to the 4-imidazolone-5-propanoate binding site. Aspartate 302 is a binding site for Fe(3+). Aspartate 302 is a binding site for Zn(2+). Positions 304 and 306 each coordinate N-formimidoyl-L-glutamate. Serine 307 is a binding site for 4-imidazolone-5-propanoate.

The protein belongs to the metallo-dependent hydrolases superfamily. HutI family. Zn(2+) is required as a cofactor. Requires Fe(3+) as cofactor.

It is found in the cytoplasm. The enzyme catalyses 4-imidazolone-5-propanoate + H2O = N-formimidoyl-L-glutamate. Its pathway is amino-acid degradation; L-histidine degradation into L-glutamate; N-formimidoyl-L-glutamate from L-histidine: step 3/3. Functionally, catalyzes the hydrolytic cleavage of the carbon-nitrogen bond in imidazolone-5-propanoate to yield N-formimidoyl-L-glutamate. It is the third step in the universal histidine degradation pathway. The chain is Imidazolonepropionase from Salinispora arenicola (strain CNS-205).